Consider the following 1403-residue polypeptide: DNA-directed RNA polymerase subunit beta' (1403 aa).

The Zn(2+) site is built by cysteine 71, cysteine 73, cysteine 86, and cysteine 89. Mg(2+)-binding residues include aspartate 462, aspartate 464, and aspartate 466. The Zn(2+) site is built by cysteine 811, cysteine 885, cysteine 892, and cysteine 895.

The protein belongs to the RNA polymerase beta' chain family. In terms of assembly, the RNAP catalytic core consists of 2 alpha, 1 beta, 1 beta' and 1 omega subunit. When a sigma factor is associated with the core the holoenzyme is formed, which can initiate transcription. Mg(2+) serves as cofactor. The cofactor is Zn(2+).

The enzyme catalyses RNA(n) + a ribonucleoside 5'-triphosphate = RNA(n+1) + diphosphate. Its function is as follows. DNA-dependent RNA polymerase catalyzes the transcription of DNA into RNA using the four ribonucleoside triphosphates as substrates. The sequence is that of DNA-directed RNA polymerase subunit beta' from Bartonella tribocorum (strain CIP 105476 / IBS 506).